The primary structure comprises 323 residues: L-lactate dehydrogenase (323 aa).

3 residues coordinate NAD(+): V11, D32, and Y63. 2 residues coordinate substrate: Q80 and R86. NAD(+)-binding positions include S99, 116 to 118 (VSN), and S141. 118–121 (NPVD) lines the substrate pocket. 146-149 (DTAR) is a binding site for substrate. Positions 151 and 166 each coordinate beta-D-fructose 1,6-bisphosphate. Catalysis depends on H173, which acts as the Proton acceptor. Y221 is subject to Phosphotyrosine. Residue T230 coordinates substrate.

It belongs to the LDH/MDH superfamily. LDH family. Homotetramer.

The protein localises to the cytoplasm. The catalysed reaction is (S)-lactate + NAD(+) = pyruvate + NADH + H(+). It functions in the pathway fermentation; pyruvate fermentation to lactate; (S)-lactate from pyruvate: step 1/1. Allosterically activated by fructose 1,6-bisphosphate (FBP). Its function is as follows. Catalyzes the conversion of lactate to pyruvate. In Kosmotoga olearia (strain ATCC BAA-1733 / DSM 21960 / TBF 19.5.1), this protein is L-lactate dehydrogenase.